A 353-amino-acid polypeptide reads, in one-letter code: Small ribosomal subunit protein uS2 (353 aa).

Residues Asp256–Ala353 are disordered. 2 stretches are compositionally biased toward low complexity: residues Ala263–Pro311 and Glu321–Glu339. The segment covering Ala340–Ala353 has biased composition (acidic residues).

This sequence belongs to the universal ribosomal protein uS2 family.

The chain is Small ribosomal subunit protein uS2 from Beutenbergia cavernae (strain ATCC BAA-8 / DSM 12333 / CCUG 43141 / JCM 11478 / NBRC 16432 / NCIMB 13614 / HKI 0122).